The chain runs to 491 residues: Acetyl-coenzyme A carboxylase carboxyl transferase subunit beta, chloroplastic (491 aa).

The interval 28–56 (LGPIENTSESEDPNRNDMKKNSHSWGSRD) is disordered. Residues 223-491 (LWVQCENCYG…FPLNKNSIEH (269 aa)) enclose the CoA carboxyltransferase N-terminal domain. Cysteine 227, cysteine 230, cysteine 246, and cysteine 249 together coordinate Zn(2+). Residues 227 to 249 (CENCYGLNYKKILKSKMNLCEQC) form a C4-type zinc finger.

This sequence belongs to the AccD/PCCB family. As to quaternary structure, acetyl-CoA carboxylase is a heterohexamer composed of biotin carboxyl carrier protein, biotin carboxylase and 2 subunits each of ACCase subunit alpha and ACCase plastid-coded subunit beta (accD). Zn(2+) is required as a cofactor.

It localises to the plastid. It is found in the chloroplast stroma. It catalyses the reaction N(6)-carboxybiotinyl-L-lysyl-[protein] + acetyl-CoA = N(6)-biotinyl-L-lysyl-[protein] + malonyl-CoA. Its pathway is lipid metabolism; malonyl-CoA biosynthesis; malonyl-CoA from acetyl-CoA: step 1/1. In terms of biological role, component of the acetyl coenzyme A carboxylase (ACC) complex. Biotin carboxylase (BC) catalyzes the carboxylation of biotin on its carrier protein (BCCP) and then the CO(2) group is transferred by the transcarboxylase to acetyl-CoA to form malonyl-CoA. The polypeptide is Acetyl-coenzyme A carboxylase carboxyl transferase subunit beta, chloroplastic (Daucus carota (Wild carrot)).